Reading from the N-terminus, the 136-residue chain is Protein PsiE (136 aa).

Helical transmembrane passes span 15 to 35 (ILQTVLNLGLLCLGLILVVFL), 55 to 75 (YELVEGLVVYFLYFEFIALIV), 82 to 102 (FHFPLRYFVYIGITAIVRLII), and 108 to 128 (PLDVLIYSAAILLLVITLWLC).

This sequence belongs to the PsiE family.

Its subcellular location is the cell inner membrane. In Escherichia coli (strain UTI89 / UPEC), this protein is Protein PsiE.